The following is a 429-amino-acid chain: Glutamate-1-semialdehyde 2,1-aminomutase (429 aa).

K265 bears the N6-(pyridoxal phosphate)lysine mark.

The protein belongs to the class-III pyridoxal-phosphate-dependent aminotransferase family. HemL subfamily. In terms of assembly, homodimer. It depends on pyridoxal 5'-phosphate as a cofactor.

Its subcellular location is the cytoplasm. It catalyses the reaction (S)-4-amino-5-oxopentanoate = 5-aminolevulinate. Its pathway is porphyrin-containing compound metabolism; protoporphyrin-IX biosynthesis; 5-aminolevulinate from L-glutamyl-tRNA(Glu): step 2/2. This Legionella pneumophila subsp. pneumophila (strain Philadelphia 1 / ATCC 33152 / DSM 7513) protein is Glutamate-1-semialdehyde 2,1-aminomutase.